The sequence spans 204 residues: Casparian strip membrane protein 2 (204 aa).

The Cytoplasmic portion of the chain corresponds to 1–41; that stretch reads MKNESTFIDVPADSSSAMKGKAPLIGVAKDHTASGSGGYNR. The chain crosses the membrane as a helical span at residues 42–62; sequence GLSIFDFLLRLAAIVAASVAA. The Extracellular portion of the chain corresponds to 63–92; sequence GTMFTSDETLPFFTQFLQFEAGYDDLPTFQ. A helical membrane pass occupies residues 93 to 113; that stretch reads FFVIAMSLVSGYIVLSLPISV. The Cytoplasmic portion of the chain corresponds to 114-125; sequence VTIVRPLAAAPR. The chain crosses the membrane as a helical span at residues 126 to 146; that stretch reads LLLLVLDTAVMGLTMAAASSA. Residues 147 to 178 are Extracellular-facing; the sequence is AAISYVAHNGNQNTNWLPICQQFFDFCQKTSG. A helical transmembrane segment spans residues 179-199; it reads AVVSSFVAVVFFMILVVLSGV. Topologically, residues 200–204 are cytoplasmic; sequence ALERH.

It belongs to the Casparian strip membrane proteins (CASP) family. Homodimer and heterodimers.

The protein resides in the cell membrane. Functionally, regulates membrane-cell wall junctions and localized cell wall deposition. Required for establishment of the Casparian strip membrane domain (CSD) and the subsequent formation of Casparian strips, a cell wall modification of the root endodermis that determines an apoplastic barrier between the intraorganismal apoplasm and the extraorganismal apoplasm and prevents lateral diffusion. This is Casparian strip membrane protein 2 from Raphanus sativus (Radish).